The primary structure comprises 410 residues: Peptidase T (410 aa).

Histidine 79 is a Zn(2+) binding site. Aspartate 81 is an active-site residue. Aspartate 142 provides a ligand contact to Zn(2+). The active-site Proton acceptor is the glutamate 176. Positions 177, 199, and 381 each coordinate Zn(2+).

This sequence belongs to the peptidase M20B family. Requires Zn(2+) as cofactor.

The protein resides in the cytoplasm. The catalysed reaction is Release of the N-terminal residue from a tripeptide.. Functionally, cleaves the N-terminal amino acid of tripeptides. In Bacillus mycoides (strain KBAB4) (Bacillus weihenstephanensis), this protein is Peptidase T.